An 80-amino-acid polypeptide reads, in one-letter code: Small ribosomal subunit protein bS16 (80 aa).

The protein belongs to the bacterial ribosomal protein bS16 family.

The chain is Small ribosomal subunit protein bS16 from Nitrosococcus oceani (strain ATCC 19707 / BCRC 17464 / JCM 30415 / NCIMB 11848 / C-107).